We begin with the raw amino-acid sequence, 372 residues long: Putative glutamate--cysteine ligase 2 (372 aa).

This sequence belongs to the glutamate--cysteine ligase type 2 family. YbdK subfamily. Homodimer.

The catalysed reaction is L-cysteine + L-glutamate + ATP = gamma-L-glutamyl-L-cysteine + ADP + phosphate + H(+). Its function is as follows. ATP-dependent carboxylate-amine ligase which exhibits weak glutamate--cysteine ligase activity. The polypeptide is Putative glutamate--cysteine ligase 2 (ybdK) (Salmonella dublin (strain CT_02021853)).